Here is a 388-residue protein sequence, read N- to C-terminus: Regulator of G-protein signaling 20 (388 aa).

Residues 138–199 (PGRPSGGRPL…TPGAAPGQPG (62 aa)) are disordered. Residues 185–197 (PAAQDTPGAAPGQ) are compositionally biased toward low complexity. Residues 262–378 (SFDKLMVTPA…MNSAVYKDLL (117 aa)) enclose the RGS domain.

In terms of assembly, forms a complex with G(alpha)z/i2 subunits and mu-opioid receptors; the formation of this complex results in mu-opioid receptor desensitization. Interacts with OPRM1. In terms of processing, fatty acylated. Heavily palmitoylated in the cysteine string motif. Post-translationally, N- and O-glycosylated in synapsomal membranes. Serine phosphorylated in synapsomal membranes. In terms of processing, sumoylated with SUMO1 and SUMO2 in synaptosomes. The sumoylated forms act as a scaffold for sequestering mu-opioid receptor-activated G(alpha) subunits. As to expression, isoform 5 is expressed in brain at high levels in the caudate nucleus and temporal lobe.

The protein resides in the membrane. It localises to the nucleus. Its subcellular location is the cytoplasm. Functionally, inhibits signal transduction by increasing the GTPase activity of G protein alpha subunits thereby driving them into their inactive GDP-bound form. Binds selectively to G(z)-alpha and G(alpha)-i2 subunits, accelerates their GTPase activity and regulates their signaling activities. The G(z)-alpha activity is inhibited by the phosphorylation and palmitoylation of the G-protein. Negatively regulates mu-opioid receptor-mediated activation of the G-proteins. The protein is Regulator of G-protein signaling 20 (RGS20) of Homo sapiens (Human).